Reading from the N-terminus, the 511-residue chain is Glutamate/gamma-aminobutyrate antiporter (511 aa).

Topologically, residues 1–13 (MATSVQTGKAKQL) are cytoplasmic. Residues 14–36 (TLLGFFAITASMVMAVYEYPTFA) traverse the membrane as a helical segment. The Periplasmic segment spans residues 37–40 (TSGF). A helical membrane pass occupies residues 41–64 (SLVFFLLLGGILWFIPVGLCAAEM). Topologically, residues 65–85 (ATVDGWEEGGVFAWVSNTLGP) are cytoplasmic. Residues 86 to 112 (RWGFAAISFGYLQIAIGFIPMLYFVLG) traverse the membrane as a helical segment. Topologically, residues 113 to 126 (ALSYILKWPALNED) are periplasmic. The chain crosses the membrane as a helical span at residues 127–147 (PITKTIAALIILWALALTQFG). At 148–151 (GTKY) the chain is on the cytoplasmic side. The chain crosses the membrane as a helical span at residues 152-180 (TARIAKVGFFAGILLPAFILIALAAIYLH). At 181–201 (SGAPVAIEMDSKTFFPDFSKV) the chain is on the periplasmic side. A helical transmembrane segment spans residues 202–225 (GTLVVFVAFILSYMGVEASATHVN). Topologically, residues 226 to 229 (EMSN) are cytoplasmic. A helical transmembrane segment spans residues 230-259 (PGRDYPLAMLLLMVAAICLSSVGGLSIAMV). At 260-288 (IPGNEINLSAGVMQTFTVLMSHVAPEIEW) the chain is on the periplasmic side. Residues 289 to 322 (TVRVISALLLLGVLAEIASWIVGPSRGMYVTAQK) form a helical membrane-spanning segment. Residues 323–337 (NLLPAAFAKMNKNGV) are Cytoplasmic-facing. Residues 338–359 (PVTLVISQLVITSIALIILTNT) traverse the membrane as a helical segment. Residues 360–362 (GGG) lie on the Periplasmic side of the membrane. The helical transmembrane segment at 363-396 (NNMSFLIALALTVVIYLCAYFMLFIGYIVLVLKH) threads the bilayer. Topologically, residues 397-409 (PDLKRTFNIPGGK) are cytoplasmic. Residues 410–430 (GVKLVVAIVGLLTSIMAFIVS) traverse the membrane as a helical segment. Residues 431–443 (FLPPDNIQGDSTD) are Periplasmic-facing. A helical membrane pass occupies residues 444–467 (MYVELLVVSFLVVLALPFILYAVH). Topologically, residues 468–511 (DRKGKANTGVTLEPINSQNAPKGHFFLHPRARSPHYIVMNDKKH) are cytoplasmic.

It belongs to the amino acid-polyamine-organocation (APC) superfamily. Glutamate:GABA antiporter (GGA) (TC 2.A.3.7) family. Monomer.

It is found in the cell inner membrane. The enzyme catalyses 4-aminobutanoate(in) + L-glutamate(out) = 4-aminobutanoate(out) + L-glutamate(in). With respect to regulation, shows pH-dependent activity. The Glu/GABA transport activity is robust at pH 4.5 and rapidly decreases with increasing pH, with no detectable activity at pH 6.5 or above. The Glu analog L-trans-pyrrolidine-2,4-dicarboxylic acid (L-PDC) blocks the uptake of glutamate by selective inhibition. In terms of biological role, involved in glutaminase-dependent acid resistance. Exchanges extracellular glutamate (Glu) for intracellular gamma-aminobutyric acid (GABA) under acidic conditions. The protonation states of substrates are crucial for transport. Selectively transports Glu with no net charge and GABA with a positive charge. Also efficiently transports glutamine and, to a smaller extent, methionine and leucine. When the extracellular pH drops below 2.5, can import L-glutamine and export either glutamate or GABA. The ability to survive the extremely acidic conditions of the stomach is essential for successful colonization of the host by commensal and pathogenic bacteria. The sequence is that of Glutamate/gamma-aminobutyrate antiporter from Escherichia coli (strain K12).